Reading from the N-terminus, the 558-residue chain is Coiled-coil domain-containing protein 63 (558 aa).

The disordered stretch occupies residues 1 to 26 (MPTKKHRRKDPESPQEPSEKTKEQLV). A compositionally biased stretch (basic and acidic residues) spans 9-26 (KDPESPQEPSEKTKEQLV). Coiled coils occupy residues 48 to 289 (NFRS…KAKK) and 339 to 416 (VTEL…VENL). Residues 531–558 (HYATRESRNRDSMPEKGDELKSKKKVTV) are disordered. A compositionally biased stretch (basic and acidic residues) spans 533–551 (ATRESRNRDSMPEKGDELK).

Plays a role in spermiogenesis. Involved in the elongation of flagella and the formation of sperm heads. This chain is Coiled-coil domain-containing protein 63, found in Bos taurus (Bovine).